Reading from the N-terminus, the 171-residue chain is Photosystem I reaction center subunit N, chloroplastic (171 aa).

The N-terminal 49 residues, Met1–Ala49, are a transit peptide targeting the chloroplast. The transit peptide at Gln50–Ala86 directs the protein to the thylakoid. Position 87 is an N-acetylglycine; partial (Gly87).

Belongs to the psaN family. As to quaternary structure, interacts with GRF5, GRF7, GRF9 and GRF10. The transit peptide is the site of PSAN that associates with 14-3-3.

It is found in the plastid. Its subcellular location is the chloroplast thylakoid membrane. Its function is as follows. May function in mediating the binding of the antenna complexes to the PSI reaction center and core antenna. Plays an important role in docking plastocyanin to the PSI complex. Does not bind pigments. The polypeptide is Photosystem I reaction center subunit N, chloroplastic (PSAN) (Arabidopsis thaliana (Mouse-ear cress)).